The sequence spans 597 residues: Phosphoinositide phospholipase C 4 (597 aa).

The EF-hand domain maps to 26 to 60 (GPVEDVRDLFEKYTEGDAHMSPEQLQKLMTEEGGE). One can recognise a PI-PLC X-box domain in the interval 114–257 (QNMDAPLSHY…LKEKILISTK (144 aa)). Catalysis depends on residues His129 and His174. Basic and acidic residues predominate over residues 259–290 (PKEYLEANDTKEKDNGEKGKDSDEDVWGKEPE). A disordered region spans residues 259-324 (PKEYLEANDT…ERGSCESDTS (66 aa)). The segment covering 293-309 (ISTQSDLDKVTSSVNDL) has biased composition (polar residues). In terms of domain architecture, PI-PLC Y-box spans 333 to 449 (KRLIAIHAGK…GYVKKPDFLM (117 aa)). A C2 domain is found at 449–579 (MDASPNGQDF…QGIRAVPLFN (131 aa)).

Requires Ca(2+) as cofactor. As to expression, low expression in leaves, roots, flowers and siliques. Expressed in pollen and in cells of the stigma surface.

Its subcellular location is the cytoplasm. It is found in the cytosol. The protein localises to the cell membrane. The enzyme catalyses a 1,2-diacyl-sn-glycero-3-phospho-(1D-myo-inositol-4,5-bisphosphate) + H2O = 1D-myo-inositol 1,4,5-trisphosphate + a 1,2-diacyl-sn-glycerol + H(+). Functionally, the production of the second messenger molecules diacylglycerol (DAG) and inositol 1,4,5-trisphosphate (IP3) is mediated by activated phosphatidylinositol-specific phospholipase C enzymes. In Arabidopsis thaliana (Mouse-ear cress), this protein is Phosphoinositide phospholipase C 4 (PLC4).